The chain runs to 94 residues: Selenoprotein K (94 aa).

The chain crosses the membrane as a helical span at residues 20 to 42 (VSFLTDFFWGIAEFVVFFFKTLL). Positions 46–94 (VKKRRGYGSSSDSRYDDGRGPPGNPPRRMGRISHLRGPSPPPMAGGUGR) are disordered. A non-standard amino acid (selenocysteine) is located at residue Sec92.

The protein belongs to the selenoprotein K family. Interacts with DERL1, DERL2, DERL3 and SELENOS. The SELENOK-SELENOS complex interacts with VCP. Interacts with ZDHHC6. Cleaved by CAPN2/m-calpain in resting macrophages but not in activated macrophages. Macrophage activation up-regulates expression of the calpain inhibitor CAST/calpastatin, resulting in inhibition of CAPN2 activity. In terms of processing, truncated SELENOK proteins produced by failed UGA/Sec decoding are ubiquitinated by the CRL2(KLHDC2) complex, which recognizes the diglycine (Gly-Gly) at the C-terminus of truncated SELENOK proteins. In terms of tissue distribution, high expression in spleen and intestine (at protein level). Expressed in a range of immune cells including T and B-cells and also in myeloid cells including macrophages, neutrophils and dendritic cells (at protein level).

The protein resides in the endoplasmic reticulum membrane. Its subcellular location is the cell membrane. Functionally, required for Ca(2+) flux in immune cells and plays a role in T-cell proliferation and in T-cell and neutrophil migration. Involved in endoplasmic reticulum-associated degradation (ERAD) of soluble glycosylated proteins. Required for palmitoylation and cell surface expression of CD36 and involved in macrophage uptake of low-density lipoprotein and in foam cell formation. Together with ZDHHC6, required for palmitoylation of ITPR1 in immune cells, leading to regulate ITPR1 stability and function. Plays a role in protection of cells from ER stress-induced apoptosis. Protects cells from oxidative stress when overexpressed in cardiomyocytes. This chain is Selenoprotein K, found in Mus musculus (Mouse).